Reading from the N-terminus, the 139-residue chain is Cystatin (139 aa).

The N-terminal stretch at 1–23 (MAGARGCVVLLAAALMLVGAVLG) is a signal peptide. The Secondary area of contact signature appears at 76–80 (QLVSG). 2 disulfides stabilise this stretch: Cys94/Cys104 and Cys118/Cys138. A Phosphoserine modification is found at Ser103.

Belongs to the cystatin family.

The protein resides in the secreted. In terms of biological role, this protein binds tightly to and inhibits a variety of thiol proteases including ficin, papain, and cathepsins B, C, H, and L. Although isolated from egg white, it is also present in serum. The polypeptide is Cystatin (Gallus gallus (Chicken)).